A 24-amino-acid chain; its full sequence is Humanin-like 12 (24 aa).

Belongs to the humanin family.

The protein resides in the secreted. It is found in the cytoplasm. Plays a role as a neuroprotective and antiapoptotic factor. The polypeptide is Humanin-like 12 (Homo sapiens (Human)).